The primary structure comprises 433 residues: Xylose isomerase (433 aa).

Active-site residues include His-99 and Asp-102. Glu-230, Glu-266, His-269, Asp-294, Asp-305, Asp-307, and Asp-337 together coordinate Mg(2+).

This sequence belongs to the xylose isomerase family. Homotetramer. It depends on Mg(2+) as a cofactor.

It localises to the cytoplasm. The catalysed reaction is alpha-D-xylose = alpha-D-xylulofuranose. This Cereibacter sphaeroides (strain ATCC 17025 / ATH 2.4.3) (Rhodobacter sphaeroides) protein is Xylose isomerase.